Here is a 122-residue protein sequence, read N- to C-terminus: Large ribosomal subunit protein uL14 (122 aa).

The protein belongs to the universal ribosomal protein uL14 family. Part of the 50S ribosomal subunit. Forms a cluster with proteins L3 and L19. In the 70S ribosome, L14 and L19 interact and together make contacts with the 16S rRNA in bridges B5 and B8.

In terms of biological role, binds to 23S rRNA. Forms part of two intersubunit bridges in the 70S ribosome. The protein is Large ribosomal subunit protein uL14 of Finegoldia magna (strain ATCC 29328 / DSM 20472 / WAL 2508) (Peptostreptococcus magnus).